The primary structure comprises 377 residues: F-box protein At2g05970 (377 aa).

In terms of domain architecture, F-box spans 8-55 (ASWSELCPDVLRCVFELLSFSDLNRTRSVCSSWHSASRHCVPTQNQIP).

The sequence is that of F-box protein At2g05970 from Arabidopsis thaliana (Mouse-ear cress).